Consider the following 1324-residue polypeptide: Structural maintenance of chromosomes protein 4 (1324 aa).

The segment at 1–24 is disordered; sequence MSDKGIFRTSSTPSIVDVTPDRGE. Threonine 19 carries the phosphothreonine; by CDC2 modification. 155–162 contributes to the ATP binding site; sequence GPNGSGKS. Coiled coils occupy residues 310–337 and 370–628; these read QELS…AKLE and NKKT…KASL. Positions 651–764 constitute an SMC hinge domain; it reads NGFFGRLGDL…KNLEQANRIA (114 aa). Coiled coils occupy residues 825–1077 and 1297–1324; these read YRQH…MSNL and LSSR…ILTD.

Belongs to the SMC family. SMC4 subfamily. As to quaternary structure, forms a heterodimer with cut14/smc2. Component of the condensin complex, which contains the smc2 and smc4 heterodimer, and three non smc subunits that probably regulate the complex: cnd1, cnd2 and cnd3. Interacts with C1739.07. Post-translationally, phosphorylated by CDC2 on Thr-19 at metaphase.

The protein localises to the nucleus. It is found in the cytoplasm. Its subcellular location is the chromosome. In terms of biological role, central component of the condensin complex, a complex required for conversion of interphase chromatin into mitotic-like condense chromosomes. The condensin complex probably introduces positive supercoils into relaxed DNA in the presence of type I topoisomerases and converts nicked DNA into positive knotted forms in the presence of type II topoisomerases. This is Structural maintenance of chromosomes protein 4 (cut3) from Schizosaccharomyces pombe (strain 972 / ATCC 24843) (Fission yeast).